Here is a 420-residue protein sequence, read N- to C-terminus: MAP kinase-interacting serine/threonine-protein kinase 1 (420 aa).

Positions 1–25 are disordered; it reads MGSSEPIPIAESDKRKKKKRKARAT. Ser-27 carries the phosphoserine; by PAK2 modification. A Protein kinase domain is found at 37–321; sequence KLTSELLGEG…AAQVLQHPWV (285 aa). ATP-binding positions include 43–51 and Lys-66; that span reads LGEGANAKV. Catalysis depends on Asp-158, which acts as the Proton acceptor. A phosphoserine mark is found at Ser-168 and Ser-173. A phosphothreonine mark is found at Thr-197, Thr-202, and Thr-332. The interval 386–420 is disordered; it reads LSPPSKSRLARRRALAQAGRSGDAPPSPTPTTPAP. A compositionally biased stretch (low complexity) spans 400–409; the sequence is LAQAGRSGDA. Over residues 410–420 the composition is skewed to pro residues; it reads PPSPTPTTPAP.

This sequence belongs to the protein kinase superfamily. CAMK Ser/Thr protein kinase family. In terms of assembly, interacts with the C-terminal regions of EIF4G1 and EIF4G2. Also binds to dephosphorylated ERK1 and ERK2, and to the p38 kinases. It depends on Mg(2+) as a cofactor. In terms of processing, dual phosphorylation of Thr-197 and Thr-202 activates the kinase. Phosphorylation of Thr-332 activates the kinase. MAPK3/ERK1 is one of the kinases which activate MKNK1/MNK1. Phosphorylation by PAK2 leads to a reduced phosphorylation of EIF4G1.

The catalysed reaction is L-seryl-[protein] + ATP = O-phospho-L-seryl-[protein] + ADP + H(+). The enzyme catalyses L-threonyl-[protein] + ATP = O-phospho-L-threonyl-[protein] + ADP + H(+). Phosphorylated and activated by the p38 kinases and kinases in the Erk pathway. Functionally, may play a role in the response to environmental stress and cytokines. Appears to regulate translation by phosphorylating EIF4E, thus increasing the affinity of this protein for the 7-methylguanosine-containing mRNA cap. This chain is MAP kinase-interacting serine/threonine-protein kinase 1 (MKNK1), found in Bos taurus (Bovine).